We begin with the raw amino-acid sequence, 96 residues long: MTKFKPLGDRILVKRVEAEERTSGGIVIPDTAKEKPIEGTVIAVGPGARDPQGNLIALEVKQGDRVLFGKWSGTEVKLSGEDYIVMKESDVFGTIA.

This sequence belongs to the GroES chaperonin family. As to quaternary structure, heptamer of 7 subunits arranged in a ring. Interacts with the chaperonin GroEL.

The protein resides in the cytoplasm. Functionally, together with the chaperonin GroEL, plays an essential role in assisting protein folding. The GroEL-GroES system forms a nano-cage that allows encapsulation of the non-native substrate proteins and provides a physical environment optimized to promote and accelerate protein folding. GroES binds to the apical surface of the GroEL ring, thereby capping the opening of the GroEL channel. In Holospora obtusa, this protein is Co-chaperonin GroES.